A 276-amino-acid chain; its full sequence is Cell wall synthesis protein KRE9 (276 aa).

Positions 1-21 are cleaved as a signal peptide; it reads MRLQRNSIICALVFLVSFVLG.

This sequence belongs to the KRE9/KNH1 family. Post-translationally, O-glycosylated.

Its subcellular location is the secreted. The protein localises to the cell wall. Functionally, involved in cell wall beta(1-&gt;6) glucan synthesis. The sequence is that of Cell wall synthesis protein KRE9 from Saccharomyces cerevisiae (strain ATCC 204508 / S288c) (Baker's yeast).